A 701-amino-acid polypeptide reads, in one-letter code: Elongation factor G (701 aa).

A tr-type G domain is found at 11–287; the sequence is TKVRNIGIMA…AVIDYLPSPL (277 aa). Residues 20 to 27, 84 to 88, and 138 to 141 contribute to the GTP site; these read AHIDAGKT, DTPGH, and NKMD.

It belongs to the TRAFAC class translation factor GTPase superfamily. Classic translation factor GTPase family. EF-G/EF-2 subfamily.

It is found in the cytoplasm. In terms of biological role, catalyzes the GTP-dependent ribosomal translocation step during translation elongation. During this step, the ribosome changes from the pre-translocational (PRE) to the post-translocational (POST) state as the newly formed A-site-bound peptidyl-tRNA and P-site-bound deacylated tRNA move to the P and E sites, respectively. Catalyzes the coordinated movement of the two tRNA molecules, the mRNA and conformational changes in the ribosome. The chain is Elongation factor G from Mycobacterium avium (strain 104).